Reading from the N-terminus, the 483-residue chain is V-type proton ATPase subunit H (483 aa).

Ser483 carries the phosphoserine modification.

It belongs to the V-ATPase H subunit family. As to quaternary structure, V-ATPase is a heteromultimeric enzyme made up of two complexes: the ATP-hydrolytic V1 complex and the proton translocation V0 complex. The V1 complex consists of three catalytic AB heterodimers that form a heterohexamer, three peripheral stalks each consisting of EG heterodimers, one central rotor including subunits D and F, and the regulatory subunits C and H. The proton translocation complex V0 consists of the proton transport subunit a, a ring of proteolipid subunits c9c'', rotary subunit d, subunits e and f, and the accessory subunits ATP6AP1/Ac45 and ATP6AP2/PRR. Interacts with AP2M1. In terms of tissue distribution, expressed in brain (at protein level).

It is found in the cytoplasmic vesicle. The protein localises to the clathrin-coated vesicle membrane. Functionally, subunit of the V1 complex of vacuolar(H+)-ATPase (V-ATPase), a multisubunit enzyme composed of a peripheral complex (V1) that hydrolyzes ATP and a membrane integral complex (V0) that translocates protons. V-ATPase is responsible for acidifying and maintaining the pH of intracellular compartments and in some cell types, is targeted to the plasma membrane, where it is responsible for acidifying the extracellular environment. Subunit H is essential for V-ATPase activity, but not for the assembly of the complex. Involved in the endocytosis mediated by clathrin-coated pits, required for the formation of endosomes. This chain is V-type proton ATPase subunit H (ATP6V1H), found in Bos taurus (Bovine).